The primary structure comprises 1094 residues: Probable arabinosyltransferase C (1094 aa).

The next 13 helical transmembrane spans lie at 28-50 (IARYVAVVAGLLGAVLAIATPLL), 232-251 (AAMILGVALTGAALVALHIL), 264-286 (PARWWSTGGLDTLVIAVLVWWHF), 341-360 (SIWMRLPTLAMALTCWWVIS), 373-392 (TSRAAAWTAAGMFLAVWLPL), 431-453 (IGALTLFSGPTGIASIGALLVAI), 466-488 (RFGVLPLVAPILAAATVTAIPIF), 530-552 (SIARRFAVLALVLALAVSVAMSL), 565-582 (SRRIIGITIISFLAMMFT), 586-608 (WTHHFGVFAGLAGSLGALAAVAV), 620-642 (TVFAAVVVFVLALSFASVNGWWY), 657-679 (WRWSLTTALLELTVLVLLLAAWF), and 700-722 (LAGIVQSPLAIATWLLVLFEVVS). The span at 817-831 (GSEPGTEGGTTAAPG) shows a compositional bias: low complexity. The segment at 817–836 (GSEPGTEGGTTAAPGINGSR) is disordered.

It belongs to the emb family.

Its subcellular location is the cell membrane. Arabinosyl transferase responsible for the polymerization of arabinose into the arabinan of arabinogalactan. The chain is Probable arabinosyltransferase C (embC) from Mycobacterium tuberculosis (strain CDC 1551 / Oshkosh).